Consider the following 76-residue polypeptide: Exodeoxyribonuclease 7 small subunit (76 aa).

Belongs to the XseB family. As to quaternary structure, heterooligomer composed of large and small subunits.

It is found in the cytoplasm. It catalyses the reaction Exonucleolytic cleavage in either 5'- to 3'- or 3'- to 5'-direction to yield nucleoside 5'-phosphates.. In terms of biological role, bidirectionally degrades single-stranded DNA into large acid-insoluble oligonucleotides, which are then degraded further into small acid-soluble oligonucleotides. The sequence is that of Exodeoxyribonuclease 7 small subunit from Geobacter metallireducens (strain ATCC 53774 / DSM 7210 / GS-15).